Reading from the N-terminus, the 179-residue chain is Large ribosomal subunit protein uL5 (179 aa).

Belongs to the universal ribosomal protein uL5 family. Part of the 50S ribosomal subunit; part of the 5S rRNA/L5/L18/L25 subcomplex. Contacts the 5S rRNA and the P site tRNA. Forms a bridge to the 30S subunit in the 70S ribosome.

Its function is as follows. This is one of the proteins that bind and probably mediate the attachment of the 5S RNA into the large ribosomal subunit, where it forms part of the central protuberance. In the 70S ribosome it contacts protein S13 of the 30S subunit (bridge B1b), connecting the 2 subunits; this bridge is implicated in subunit movement. Contacts the P site tRNA; the 5S rRNA and some of its associated proteins might help stabilize positioning of ribosome-bound tRNAs. This chain is Large ribosomal subunit protein uL5, found in Thioalkalivibrio sulfidiphilus (strain HL-EbGR7).